A 386-amino-acid chain; its full sequence is Putative matrix metalloproteinase (386 aa).

An N-terminal signal peptide occupies residues 1 to 34 (MPTAHFQHSIRYLNVTNMLIFSIISFLLIYQTNS). N-linked (GlcNAc...) asparagine; by host glycosylation is found at asparagine 14 and asparagine 58. Histidine 186 serves as a coordination point for Zn(2+). Glutamate 187 is an active-site residue. Zn(2+) contacts are provided by histidine 190 and histidine 196. Positions 235-258 (NEQSTHQSTRHRPHRRPSPDGSCR) are disordered.

This sequence belongs to the peptidase M10A family. Requires Zn(2+) as cofactor.

The chain is Putative matrix metalloproteinase from Spodoptera frugiperda (Fall armyworm).